The primary structure comprises 238 residues: Ubiquinone biosynthesis O-methyltransferase (238 aa).

Residues R39, G58, D79, and M123 each coordinate S-adenosyl-L-methionine.

It belongs to the methyltransferase superfamily. UbiG/COQ3 family.

The catalysed reaction is a 3-demethylubiquinol + S-adenosyl-L-methionine = a ubiquinol + S-adenosyl-L-homocysteine + H(+). The enzyme catalyses a 3-(all-trans-polyprenyl)benzene-1,2-diol + S-adenosyl-L-methionine = a 2-methoxy-6-(all-trans-polyprenyl)phenol + S-adenosyl-L-homocysteine + H(+). The protein operates within cofactor biosynthesis; ubiquinone biosynthesis. O-methyltransferase that catalyzes the 2 O-methylation steps in the ubiquinone biosynthetic pathway. The sequence is that of Ubiquinone biosynthesis O-methyltransferase from Hahella chejuensis (strain KCTC 2396).